The following is a 212-amino-acid chain: Ribosomal RNA small subunit methyltransferase G (212 aa).

S-adenosyl-L-methionine contacts are provided by residues Gly-80, Leu-85, 131–132 (AE), and Arg-146.

This sequence belongs to the methyltransferase superfamily. RNA methyltransferase RsmG family.

The protein localises to the cytoplasm. It catalyses the reaction guanosine(527) in 16S rRNA + S-adenosyl-L-methionine = N(7)-methylguanosine(527) in 16S rRNA + S-adenosyl-L-homocysteine. Functionally, specifically methylates the N7 position of guanine in position 527 of 16S rRNA. In Xanthomonas campestris pv. campestris (strain 8004), this protein is Ribosomal RNA small subunit methyltransferase G.